A 57-amino-acid polypeptide reads, in one-letter code: UPF0391 membrane protein XC_2938 (57 aa).

Transmembrane regions (helical) follow at residues 4–24 (WAIIFAIIGLIAGALGFGGMA) and 33–53 (FLFWAGIIIAIVLFVLGMTIA).

This sequence belongs to the UPF0391 family.

Its subcellular location is the cell membrane. This is UPF0391 membrane protein XC_2938 from Xanthomonas campestris pv. campestris (strain 8004).